The sequence spans 285 residues: Glycine--tRNA ligase alpha subunit (285 aa).

It belongs to the class-II aminoacyl-tRNA synthetase family. Tetramer of two alpha and two beta subunits.

It localises to the cytoplasm. It catalyses the reaction tRNA(Gly) + glycine + ATP = glycyl-tRNA(Gly) + AMP + diphosphate. This Granulibacter bethesdensis (strain ATCC BAA-1260 / CGDNIH1) protein is Glycine--tRNA ligase alpha subunit.